The chain runs to 553 residues: Mannuronan C5-epimerase AlgE4 (553 aa).

PbH1 repeat units lie at residues 133–155 (DRDV…DPHE), 157–179 (TINL…VADY), 180–202 (LVDS…NVVT), 204–226 (THDF…VVQR), 234–256 (PSNI…LLKM), 257–279 (TSDI…RVYG), 280–301 (AQDV…AVPE), and 320–342 (TLNT…GIQE). The disordered stretch occupies residues 367–427 (YGPHSTVSGE…DILDGGAGRD (61 aa)). 2 Hemolysin-type calcium-binding repeats span residues 403–420 (QGGS…DDIL) and 421–438 (DGGA…ADTF).

Belongs to the D-mannuronate C5-epimerase family. The cofactor is Ca(2+).

It is found in the secreted. It catalyses the reaction [(1-&gt;4)-beta-D-mannuronosyl](n) = [alginate](n). The protein operates within glycan biosynthesis; alginate biosynthesis. Inhibited by zinc. Functionally, converts beta-D-mannuronic acid (M) to alpha-L-guluronic acid (G), but introduces almost exclusively MG blocks, producing a polymer with non-gel-forming capacity. This chain is Mannuronan C5-epimerase AlgE4, found in Azotobacter vinelandii.